The chain runs to 213 residues: Na(+)-translocating NADH-quinone reductase subunit D (213 aa).

Transmembrane regions (helical) follow at residues 22–42, 43–63, 77–97, 101–121, 131–151, and 183–203; these read LIAI…TTAL, TMGF…SLLR, IIIS…FFTI, LSVF…AESM, FLDG…ISII, and LGLM…IWIV.

Belongs to the NqrDE/RnfAE family. As to quaternary structure, composed of six subunits; NqrA, NqrB, NqrC, NqrD, NqrE and NqrF.

It localises to the cell inner membrane. The catalysed reaction is a ubiquinone + n Na(+)(in) + NADH + H(+) = a ubiquinol + n Na(+)(out) + NAD(+). In terms of biological role, NQR complex catalyzes the reduction of ubiquinone-1 to ubiquinol by two successive reactions, coupled with the transport of Na(+) ions from the cytoplasm to the periplasm. NqrA to NqrE are probably involved in the second step, the conversion of ubisemiquinone to ubiquinol. This chain is Na(+)-translocating NADH-quinone reductase subunit D, found in Chlamydia trachomatis serovar L2 (strain ATCC VR-902B / DSM 19102 / 434/Bu).